Here is a 699-residue protein sequence, read N- to C-terminus: Elongation factor G (699 aa).

The 283-residue stretch at 8–290 (ERYRNIGIMA…GVIEYLPSPV (283 aa)) folds into the tr-type G domain. GTP-binding positions include 17–24 (AHIDAGKT), 88–92 (DTPGH), and 142–145 (NKMD).

It belongs to the TRAFAC class translation factor GTPase superfamily. Classic translation factor GTPase family. EF-G/EF-2 subfamily.

It localises to the cytoplasm. Its function is as follows. Catalyzes the GTP-dependent ribosomal translocation step during translation elongation. During this step, the ribosome changes from the pre-translocational (PRE) to the post-translocational (POST) state as the newly formed A-site-bound peptidyl-tRNA and P-site-bound deacylated tRNA move to the P and E sites, respectively. Catalyzes the coordinated movement of the two tRNA molecules, the mRNA and conformational changes in the ribosome. This Alkalilimnicola ehrlichii (strain ATCC BAA-1101 / DSM 17681 / MLHE-1) protein is Elongation factor G.